The chain runs to 445 residues: Exodeoxyribonuclease 7 large subunit (445 aa).

It belongs to the XseA family. As to quaternary structure, heterooligomer composed of large and small subunits.

The protein localises to the cytoplasm. The enzyme catalyses Exonucleolytic cleavage in either 5'- to 3'- or 3'- to 5'-direction to yield nucleoside 5'-phosphates.. In terms of biological role, bidirectionally degrades single-stranded DNA into large acid-insoluble oligonucleotides, which are then degraded further into small acid-soluble oligonucleotides. This is Exodeoxyribonuclease 7 large subunit from Shewanella halifaxensis (strain HAW-EB4).